Consider the following 380-residue polypeptide: Protein GOLM2 (380 aa).

The residue at position 1 (Met1) is an N-acetylmethionine. The Cytoplasmic segment spans residues 1–14; sequence MVGFGANRRAGRLP. A helical; Signal-anchor for type II membrane protein transmembrane segment spans residues 15 to 35; that stretch reads SLVLAVLLVVIAVLAFNYWSI. Residues 35–195 adopt a coiled-coil conformation; that stretch reads ISSRHVLLQE…QFLQEQKQEA (161 aa). At 36–380 the chain is on the lumenal side; it reads SSRHVLLQEE…YGKQRFNDAL (345 aa). 2 stretches are compositionally biased toward basic and acidic residues: residues 192-212 and 227-247; these read KQEA…DNHA and KNEE…KRGG. The interval 192-254 is disordered; sequence KQEAHKFESK…RGGDAGMPGI (63 aa). Residues Ser233 and Ser275 each carry the phosphoserine modification. A disordered region spans residues 280–380; it reads ESHQVISHLP…YGKQRFNDAL (101 aa). The span at 305 to 321 shows a compositional bias: polar residues; it reads NHNGNSRTSKQNPSNPL. A compositionally biased stretch (basic and acidic residues) spans 344–380; the sequence is ATKDRAGDFHKLKQNDEERELQMDPADYGKQRFNDAL.

It belongs to the GOLM family.

Its subcellular location is the membrane. The sequence is that of Protein GOLM2 (GOLM2) from Bos taurus (Bovine).